The chain runs to 274 residues: Large ribosomal subunit protein uL2 (274 aa).

The interval 200–274 is disordered; that stretch reads HALEKSGKAG…SKYIIERRKK (75 aa). 2 stretches are compositionally biased toward basic residues: residues 207–220 and 255–274; these read KAGR…RPRN and LKTR…RRKK.

Belongs to the universal ribosomal protein uL2 family. Part of the 50S ribosomal subunit. Forms a bridge to the 30S subunit in the 70S ribosome.

One of the primary rRNA binding proteins. Required for association of the 30S and 50S subunits to form the 70S ribosome, for tRNA binding and peptide bond formation. It has been suggested to have peptidyltransferase activity; this is somewhat controversial. Makes several contacts with the 16S rRNA in the 70S ribosome. The protein is Large ribosomal subunit protein uL2 of Parabacteroides distasonis (strain ATCC 8503 / DSM 20701 / CIP 104284 / JCM 5825 / NCTC 11152).